The primary structure comprises 214 residues: tRNA (guanine-N(7)-)-methyltransferase (214 aa).

S-adenosyl-L-methionine contacts are provided by Glu44, Glu69, Asp96, and Asp118. Asp118 is an active-site residue. Substrate contacts are provided by residues Lys122, Asp154, and 191 to 194; that span reads TEYE.

The protein belongs to the class I-like SAM-binding methyltransferase superfamily. TrmB family.

It carries out the reaction guanosine(46) in tRNA + S-adenosyl-L-methionine = N(7)-methylguanosine(46) in tRNA + S-adenosyl-L-homocysteine. It functions in the pathway tRNA modification; N(7)-methylguanine-tRNA biosynthesis. In terms of biological role, catalyzes the formation of N(7)-methylguanine at position 46 (m7G46) in tRNA. The polypeptide is tRNA (guanine-N(7)-)-methyltransferase (Listeria innocua serovar 6a (strain ATCC BAA-680 / CLIP 11262)).